A 201-amino-acid chain; its full sequence is Small ribosomal subunit protein uS4c (201 aa).

Positions 20 to 43 (GLTSKRPRAGSDLRNQSRAGKKSQ) are disordered. The region spanning 89–150 (MRLDNILFRL…EQKSRVMIQN (62 aa)) is the S4 RNA-binding domain.

Belongs to the universal ribosomal protein uS4 family. In terms of assembly, part of the 30S ribosomal subunit. Contacts protein S5. The interaction surface between S4 and S5 is involved in control of translational fidelity.

It localises to the plastid. The protein resides in the chloroplast. In terms of biological role, one of the primary rRNA binding proteins, it binds directly to 16S rRNA where it nucleates assembly of the body of the 30S subunit. With S5 and S12 plays an important role in translational accuracy. The polypeptide is Small ribosomal subunit protein uS4c (rps4) (Populus alba (White poplar)).